Consider the following 359-residue polypeptide: Phospho-N-acetylmuramoyl-pentapeptide-transferase (359 aa).

The next 10 membrane-spanning stretches (helical) occupy residues 23–43, 68–88, 92–112, 126–146, 165–185, 198–218, 235–255, 262–282, 287–307, and 336–356; these read VAFFVAFGLSVFFMPYFIKWA, MGGIVFIISMICASLLCGNLF, VLLGLFCISCFALIGARDDYM, MKFFLLFIVSLIITSILLYIG, AFKIMDISVLALGFWVLVFLA, GLATMPSICALFSLSAFVYVA, SGELVILSVALIGALFGFLWY, VFMGDSGSLALGAFIAFMAIV, ILLLLIGIIFVIEALSVILQV, and KIIVRFWIIAILANIIALLSL.

Belongs to the glycosyltransferase 4 family. MraY subfamily. Requires Mg(2+) as cofactor.

The protein resides in the cell inner membrane. It catalyses the reaction UDP-N-acetyl-alpha-D-muramoyl-L-alanyl-gamma-D-glutamyl-meso-2,6-diaminopimeloyl-D-alanyl-D-alanine + di-trans,octa-cis-undecaprenyl phosphate = di-trans,octa-cis-undecaprenyl diphospho-N-acetyl-alpha-D-muramoyl-L-alanyl-D-glutamyl-meso-2,6-diaminopimeloyl-D-alanyl-D-alanine + UMP. It participates in cell wall biogenesis; peptidoglycan biosynthesis. Its function is as follows. Catalyzes the initial step of the lipid cycle reactions in the biosynthesis of the cell wall peptidoglycan: transfers peptidoglycan precursor phospho-MurNAc-pentapeptide from UDP-MurNAc-pentapeptide onto the lipid carrier undecaprenyl phosphate, yielding undecaprenyl-pyrophosphoryl-MurNAc-pentapeptide, known as lipid I. The polypeptide is Phospho-N-acetylmuramoyl-pentapeptide-transferase (Helicobacter hepaticus (strain ATCC 51449 / 3B1)).